A 243-amino-acid polypeptide reads, in one-letter code: DNA repair protein RecO (243 aa).

This sequence belongs to the RecO family.

Its function is as follows. Involved in DNA repair and RecF pathway recombination. The chain is DNA repair protein RecO from Thermobifida fusca (strain YX).